A 123-amino-acid polypeptide reads, in one-letter code: Putative membrane protein insertion efficiency factor (123 aa).

This sequence belongs to the UPF0161 family.

The protein resides in the cell inner membrane. Could be involved in insertion of integral membrane proteins into the membrane. This is Putative membrane protein insertion efficiency factor from Beijerinckia indica subsp. indica (strain ATCC 9039 / DSM 1715 / NCIMB 8712).